A 145-amino-acid polypeptide reads, in one-letter code: Transcription antitermination protein NusB (145 aa).

It belongs to the NusB family.

In terms of biological role, involved in transcription antitermination. Required for transcription of ribosomal RNA (rRNA) genes. Binds specifically to the boxA antiterminator sequence of the ribosomal RNA (rrn) operons. The protein is Transcription antitermination protein NusB of Acetivibrio thermocellus (strain ATCC 27405 / DSM 1237 / JCM 9322 / NBRC 103400 / NCIMB 10682 / NRRL B-4536 / VPI 7372) (Clostridium thermocellum).